The sequence spans 90 residues: Cell division topological specificity factor (90 aa).

It belongs to the MinE family.

Its function is as follows. Prevents the cell division inhibition by proteins MinC and MinD at internal division sites while permitting inhibition at polar sites. This ensures cell division at the proper site by restricting the formation of a division septum at the midpoint of the long axis of the cell. This Clostridium perfringens (strain SM101 / Type A) protein is Cell division topological specificity factor.